Here is a 540-residue protein sequence, read N- to C-terminus: Signal peptide peptidase-like 2 (540 aa).

Residues 1 to 27 (MDSLRFLRILLLSSSILLLSLRSTVTA) form the signal peptide. The Lumenal portion of the chain corresponds to 28-196 (GDIVHQDNLA…PRRPAVDVAE (169 aa)). Asn83 carries an N-linked (GlcNAc...) asparagine glycan. The 79-residue stretch at 95 to 173 (SCTPLKNKLS…QDAGASLQKM (79 aa)) folds into the PA domain. Asn176 carries an N-linked (GlcNAc...) asparagine glycan. A helical membrane pass occupies residues 197 to 217 (VFLWLMAIGTILCASYWSAWS). Residues 218–248 (AREAAIEHDKLLKDAIDEIPNTNDGGSGVVE) are Cytoplasmic-facing. The chain crosses the membrane as a helical span at residues 249-269 (INSISAIFFVVLASGFLVILY). Topologically, residues 270 to 278 (KLMSYWFVE) are lumenal. The helical transmembrane segment at 279–299 (LLVVVFCIGGVEGLQTCLVAL) threads the bilayer. At 300–319 (LSRWFQRAADTYVKVPFLGP) the chain is on the cytoplasmic side. Residues 320-340 (ISYLTLAVSPFCIVFAVLWAV) form a helical membrane-spanning segment. The Lumenal segment spans residues 341–345 (YRVHS). The helical transmembrane segment at 346-366 (FAWIGQDVLGIALIITVLQIV) threads the bilayer. At 367–370 (HVPN) the chain is on the cytoplasmic side. Residues 371-391 (LKVGTVLLSCAFLYDIFWVFV) traverse the membrane as a helical segment. Residue Asp385 is part of the active site. Over 392 to 429 (SKKLFHESVMIVVARGDKSGEDGIPMLLKIPRMFDPWG) the chain is Lumenal. The chain crosses the membrane as a helical span at residues 430–450 (GYSIIGFGDILLPGLLIAFAL). Asp438 is a catalytic residue. Topologically, residues 451–462 (RYDWLANKTLRT) are cytoplasmic. Residues 463 to 483 (GYFIWAMVAYGLGLLITYVAL) traverse the membrane as a helical segment. Residues 484 to 488 (NLMDG) are Lumenal-facing. Residues 489-509 (HGQPALLYIVPFTLGTMLTLA) traverse the membrane as a helical segment. The short motif at 492–494 (PAL) is the PAL element. Over 510-540 (RKRDDLWILWTKGEPERACPHHVRLEQCSEK) the chain is Cytoplasmic.

It belongs to the peptidase A22B family. In terms of processing, glycosylated. Ubiquitous.

The protein localises to the endosome membrane. In terms of biological role, intramembrane-cleaving aspartic protease (I-CLiP) that cleaves type II membrane signal peptides in the hydrophobic plane of the membrane. This is Signal peptide peptidase-like 2 (SPPL2) from Arabidopsis thaliana (Mouse-ear cress).